The primary structure comprises 95 residues: MNAVIVLCVTISAVLIHQCYSTAEATLSINGGDMCIEKTCNRSIDAAGKKVIAGCPGGCLCVFNVSDVTYPANGTCYQLATTTTNRPGAVMERER.

The first 21 residues, 1–21 (MNAVIVLCVTISAVLIHQCYS), serve as a signal peptide directing secretion. 3 disulfide bridges follow: Cys35–Cys59, Cys40–Cys61, and Cys55–Cys76.

Belongs to the RaCI family. Expressed in salivary glands.

The protein resides in the secreted. Its function is as follows. Complement inhibitor. Prevents complement-mediated C5 activation by binding to C5. Binds C5 at a different binding site than the other tick complement inhibitors OmCI and CirpT1, and the drug eculizumab. The polypeptide is Complement inhibitor RaCI5 (Rhipicephalus appendiculatus (Brown ear tick)).